A 380-amino-acid chain; its full sequence is Flap endonuclease 1 (380 aa).

An N-domain region spans residues 1 to 104 (MGIQGLAKLI…GELAKRAERR (104 aa)). Asp34 provides a ligand contact to Mg(2+). DNA contacts are provided by Arg47 and Arg70. Residues Asp86, Glu158, Glu160, Asp179, and Asp181 each contribute to the Mg(2+) site. An I-domain region spans residues 122-253 (DVNKFQKRLV…KRAIELIRQY (132 aa)). DNA is bound at residue Glu158. Positions 231 and 233 each coordinate DNA. Asp233 provides a ligand contact to Mg(2+). The tract at residues 328 to 380 (LKNARHTSTQGRLDSFFKVMSSPSVKRKEPPKGAKGSASKKAKMSGGKFKKPK) is disordered. The segment at 336–344 (TQGRLDSFF) is interaction with PCNA. Residues 365–380 (ASKKAKMSGGKFKKPK) are compositionally biased toward basic residues.

It belongs to the XPG/RAD2 endonuclease family. FEN1 subfamily. Interacts with PCNA. Three molecules of FEN1 bind to one PCNA trimer with each molecule binding to one PCNA monomer. PCNA stimulates the nuclease activity without altering cleavage specificity. It depends on Mg(2+) as a cofactor. Phosphorylated. Phosphorylation upon DNA damage induces relocalization to the nuclear plasma.

Its subcellular location is the nucleus. The protein resides in the nucleolus. The protein localises to the nucleoplasm. It is found in the mitochondrion. Its function is as follows. Structure-specific nuclease with 5'-flap endonuclease and 5'-3' exonuclease activities involved in DNA replication and repair. During DNA replication, cleaves the 5'-overhanging flap structure that is generated by displacement synthesis when DNA polymerase encounters the 5'-end of a downstream Okazaki fragment. It enters the flap from the 5'-end and then tracks to cleave the flap base, leaving a nick for ligation. Also involved in the long patch base excision repair (LP-BER) pathway, by cleaving within the apurinic/apyrimidinic (AP) site-terminated flap. Acts as a genome stabilization factor that prevents flaps from equilibrating into structures that lead to duplications and deletions. Also possesses 5'-3' exonuclease activity on nicked or gapped double-stranded DNA, and exhibits RNase H activity. Also involved in replication and repair of rDNA and in repairing mitochondrial DNA. The chain is Flap endonuclease 1 from Branchiostoma floridae (Florida lancelet).